The sequence spans 79 residues: UPF0154 protein SAG1601 (79 aa).

A helical transmembrane segment spans residues 5-25; the sequence is IWILLIIVALFGGLVGGIFIA.

It belongs to the UPF0154 family.

It is found in the membrane. The chain is UPF0154 protein SAG1601 from Streptococcus agalactiae serotype V (strain ATCC BAA-611 / 2603 V/R).